Reading from the N-terminus, the 64-residue chain is MPKMKTNKGAAKRFQKTAGGIKFKHAGKRHILTKRTTKNKRQLRPNSILPKCEVAQVLRMMPYA.

It belongs to the bacterial ribosomal protein bL35 family.

This chain is Large ribosomal subunit protein bL35, found in Vibrio atlanticus (strain LGP32) (Vibrio splendidus (strain Mel32)).